The sequence spans 59 residues: Alpha-like toxin CsEv5 (59 aa).

Positions 1-59 constitute an LCN-type CS-alpha/beta domain; that stretch reads KDGYPVDSKGCKLSCVANNYCDNQCKMKKASGGHCYAMSCYCEGLPENAKVSDSATNIC. Intrachain disulfides connect Cys-11–Cys-59, Cys-15–Cys-35, Cys-21–Cys-40, and Cys-25–Cys-42.

The protein belongs to the long (4 C-C) scorpion toxin superfamily. Sodium channel inhibitor family. Expressed by the venom gland.

Its subcellular location is the secreted. In terms of biological role, binds voltage-independently sodium channels (Nav) and inhibits the inactivation of the activated channels, thereby blocking neuronal transmission. Is highly toxic to insects and barely toxic to mammals. As it does not compete with the classical alpha-toxin AaH2, this toxin is considered as an alpha-like toxin. The chain is Alpha-like toxin CsEv5 from Centruroides sculpturatus (Arizona bark scorpion).